We begin with the raw amino-acid sequence, 175 residues long: Heme-dependent oxidative N-demethylase delta subunit (175 aa).

In terms of assembly, the heme-dependent oxidative N-demethylase (HODM) is a heterotetramer composed of a catalytic alpha subunit, a FMN/2Fe-2S-dependent oxidoreductase beta subunit, a gamma subunit with putative aminotransferase activity, and a delta subunit of unknown function.

Component of the heme-dependent oxidative N-demethylase (HODM) enzyme, that catalyzes the NADPH-dependent oxidation of dimethylamine (DMA) to methylamine (MA) and formaldehyde. Functions in bacterial methylated amine catabolism, linking alkylamine oxidation to the tetrahydrofolate C1 pool. The function of the delta subunit is unknown. In Ectopseudomonas mendocina (strain ymp) (Pseudomonas mendocina), this protein is Heme-dependent oxidative N-demethylase delta subunit.